Reading from the N-terminus, the 307-residue chain is Taste receptor type 2 member 41 (307 aa).

The Extracellular segment spans residues 1-7; it reads MQAALMA. Residues 8-28 form a helical membrane-spanning segment; sequence FFMLLFSLLSLLGIAANGFIV. The Cytoplasmic portion of the chain corresponds to 29–40; the sequence is LVLGREWLRYGR. A helical membrane pass occupies residues 41-61; the sequence is LLPLDMILISLGASRXCLQLV. Residues 62-88 lie on the Extracellular side of the membrane; the sequence is GTVHNFYYSARKVEYSGGLGRQFFHLH. A helical transmembrane segment spans residues 89 to 109; it reads WHFLNSATFWFCSWLSVLFCV. Over 110 to 129 the chain is Cytoplasmic; sequence KIANITHPTFLWLKWRFPGW. The helical transmembrane segment at 130 to 150 threads the bilayer; sequence VPWLLLGSVLISFIITLLFFW. The Extracellular portion of the chain corresponds to 151 to 183; that stretch reads VNYPVYQELLIRKFSGNMTYKWNTRIETYYFPS. Asparagine 167 carries N-linked (GlcNAc...) asparagine glycosylation. A helical transmembrane segment spans residues 184 to 204; that stretch reads LKLVIWSIPFSVFLVSIMLLI. The Cytoplasmic segment spans residues 205–234; the sequence is NSLRRHTQRMQHNGHSLQDPSTQAHTRALK. The chain crosses the membrane as a helical span at residues 235-255; the sequence is SLISFLFLYALSFLSLIIDAT. Residues 256-264 lie on the Extracellular side of the membrane; that stretch reads KFISMQNDF. Residues 265–285 traverse the membrane as a helical segment; the sequence is YWPWQIAVYLCISVHPFILIF. Topologically, residues 286–307 are cytoplasmic; it reads SNLKLRSMFWQVLLLARGFWVA.

It belongs to the G-protein coupled receptor T2R family.

Its subcellular location is the membrane. Its function is as follows. Receptor that may play a role in the perception of bitterness and is gustducin-linked. May play a role in sensing the chemical composition of the gastrointestinal content. The activity of this receptor may stimulate alpha gustducin, mediate PLC-beta-2 activation and lead to the gating of TRPM5. This Gorilla gorilla gorilla (Western lowland gorilla) protein is Taste receptor type 2 member 41 (TAS2R41).